Reading from the N-terminus, the 529-residue chain is UDP-glucuronosyltransferase 2B28 (529 aa).

A signal peptide spans 1-24 (MALKWTSVLLLIHLGCYFSSGSCG). Position 135 is an N6-succinyllysine (lysine 135). A glycan (N-linked (GlcNAc...) asparagine) is linked at asparagine 315. The helical transmembrane segment at 495–517 (GFLLACVATVIFVVTKFCLFCFW) threads the bilayer.

The protein belongs to the UDP-glycosyltransferase family. Expressed in the liver, breast and kidney.

The protein localises to the endoplasmic reticulum membrane. Its subcellular location is the cytoplasm. It is found in the perinuclear region. The enzyme catalyses glucuronate acceptor + UDP-alpha-D-glucuronate = acceptor beta-D-glucuronoside + UDP + H(+). Its function is as follows. UDP-glucuronosyltransferase (UGT) that catalyzes phase II biotransformation reactions in which lipophilic substrates are conjugated with glucuronic acid to increase the metabolite's water solubility, thereby facilitating excretion into either the urine or bile. Essential for the elimination and detoxification of drugs, xenobiotics and endogenous compounds. Catalyzes the glucuronidation of endogenous steroid hormones such as androgens (androsterone, 3alpha-androstanediol) and estrogens (estradiol, estrone). Catalyzes the glucuronidation of bile acid substrates, which are natural detergents for dietary lipids absorption. Displays glucuronidation activity toward the phenolic compounds eugenol. Functionally, lack UDP-glucuronosyltransferase (UGT) activity. This is UDP-glucuronosyltransferase 2B28 from Homo sapiens (Human).